Here is a 318-residue protein sequence, read N- to C-terminus: Acetyl-coenzyme A carboxylase carboxyl transferase subunit alpha (318 aa).

One can recognise a CoA carboxyltransferase C-terminal domain in the interval 36-293 (EIDRLKEKST…KTRLSEQLDQ (258 aa)).

It belongs to the AccA family. As to quaternary structure, acetyl-CoA carboxylase is a heterohexamer composed of biotin carboxyl carrier protein (AccB), biotin carboxylase (AccC) and two subunits each of ACCase subunit alpha (AccA) and ACCase subunit beta (AccD).

It is found in the cytoplasm. The enzyme catalyses N(6)-carboxybiotinyl-L-lysyl-[protein] + acetyl-CoA = N(6)-biotinyl-L-lysyl-[protein] + malonyl-CoA. Its pathway is lipid metabolism; malonyl-CoA biosynthesis; malonyl-CoA from acetyl-CoA: step 1/1. Functionally, component of the acetyl coenzyme A carboxylase (ACC) complex. First, biotin carboxylase catalyzes the carboxylation of biotin on its carrier protein (BCCP) and then the CO(2) group is transferred by the carboxyltransferase to acetyl-CoA to form malonyl-CoA. The polypeptide is Acetyl-coenzyme A carboxylase carboxyl transferase subunit alpha (Teredinibacter turnerae (strain ATCC 39867 / T7901)).